The sequence spans 319 residues: Annexin A4 (319 aa).

Ala2 carries the post-translational modification N-acetylalanine. Thr7 is subject to Phosphothreonine; by PKC. Position 12 is a phosphoserine (Ser12). Annexin repeat units lie at residues 14 to 85, 86 to 157, 169 to 241, and 245 to 316; these read FNAA…GMMT, PTVL…SLSA, ALVR…AIVK, and NKSA…ILCG. N6-acetyllysine is present on residues Lys213, Lys293, and Lys300.

The protein belongs to the annexin family. In terms of assembly, monomer.

The protein resides in the zymogen granule membrane. In terms of biological role, calcium/phospholipid-binding protein which promotes membrane fusion and is involved in exocytosis. The chain is Annexin A4 (ANXA4) from Sus scrofa (Pig).